We begin with the raw amino-acid sequence, 410 residues long: MFDTVCTLPLSADLFAQAIHPSEPIISVGLSTGHVQTFRLPTEEEEEHSDDEQASVSSSRNGKGHIDTMWRTRRHKGSCRTLTFGIDGEMLYSAGTDGLVKAAKAETGVVENKILIPTAKDGSVDAPTVVHALSPQTLLLATDSSKLHLYDLRVPYSKVAAPPQQTHRPHDDYVSSLTPLPASDTSTSGFSKQWVTTGGTTLAVTDLRRGVLMRSEDQEEELVSSTYIGGLSASGTSRGEKVVVGGSSGVLTLWERGAWDDQDERIYVERGAGGGESLETLTVVPEELGKGKMIAAGLGSGKVKFVRMGLNKVVSELTHDETEGVIGLGFDVEGHMVSGGGQIVKVWHEAADSIGGEKRGFGGDSDDSDDDSDDSDHEPKQGDDSRRKRKKQKGKDRGKGPEIMAFADLD.

6 WD repeats span residues 9-48 (PLSA…EEEH), 74-113 (RHKG…VENK), 119-160 (AKDG…SKVA), 223-264 (VSST…DQDE), 273-316 (GGGE…VVSE), and 320-357 (DETE…IGGE). A disordered region spans residues 41–65 (PTEEEEEHSDDEQASVSSSRNGKGH). A compositionally biased stretch (acidic residues) spans 43–53 (EEEEEHSDDEQ). Positions 354 to 410 (IGGEKRGFGGDSDDSDDDSDDSDHEPKQGDDSRRKRKKQKGKDRGKGPEIMAFADLD) are disordered. A compositionally biased stretch (acidic residues) spans 364-376 (DSDDSDDDSDDSD). A compositionally biased stretch (basic and acidic residues) spans 377–386 (HEPKQGDDSR).

This sequence belongs to the WD repeat WDR55 family.

Its subcellular location is the nucleus. It is found in the nucleolus. The protein is WD repeat-containing protein jip5 (jip5) of Emericella nidulans (strain FGSC A4 / ATCC 38163 / CBS 112.46 / NRRL 194 / M139) (Aspergillus nidulans).